A 292-amino-acid chain; its full sequence is 11-beta-hydroxysteroid dehydrogenase 1 (292 aa).

A helical transmembrane segment spans residues 7 to 24 (YLLPILGIFLAYYYYSAN).

Belongs to the short-chain dehydrogenases/reductases (SDR) family. As to quaternary structure, homodimer. Expressed highest in liver and ovaries (corpora lutea, granulosa cells, thecal, uterine caruncle and intercarunculer tissues), lower expression in kidney and spleen, and lowest in the adrenal.

It is found in the endoplasmic reticulum membrane. It catalyses the reaction an 11beta-hydroxysteroid + NADP(+) = an 11-oxosteroid + NADPH + H(+). It carries out the reaction corticosterone + NADP(+) = 11-dehydrocorticosterone + NADPH + H(+). The catalysed reaction is cortisone + NADPH + H(+) = cortisol + NADP(+). The enzyme catalyses a 7beta-hydroxysteroid + NADP(+) = a 7-oxosteroid + NADPH + H(+). It catalyses the reaction 7-oxocholesterol + NADPH + H(+) = 7beta-hydroxycholesterol + NADP(+). It carries out the reaction chenodeoxycholate + NADP(+) = 7-oxolithocholate + NADPH + H(+). The catalysed reaction is 7-oxolithocholate + NADPH + H(+) = ursodeoxycholate + NADP(+). The enzyme catalyses glycochenodeoxycholate + NADP(+) = 7-oxoglycolithocholate + NADPH + H(+). It catalyses the reaction taurochenodeoxycholate + NADP(+) = 7-oxotaurolithocholate + NADPH + H(+). It carries out the reaction tauroursodeoxycholate + NADP(+) = 7-oxotaurolithocholate + NADPH + H(+). The catalysed reaction is glycoursodeoxycholate + NADP(+) = 7-oxoglycolithocholate + NADPH + H(+). The enzyme catalyses 7-oxopregnenolone + NADPH + H(+) = 7beta-hydroxypregnenolone + NADP(+). It catalyses the reaction 3beta,7alpha-dihydroxyandrost-5-en-17-one + NADP(+) = 3beta-hydroxy-5-androstene-7,17-dione + NADPH + H(+). It carries out the reaction 3beta-hydroxy-5-androstene-7,17-dione + NADPH + H(+) = 3beta,7beta-dihydroxyandrost-5-en-17-one + NADP(+). The catalysed reaction is 3beta-hydroxy-5alpha-androstane-7,17-dione + NADPH + H(+) = 3beta,7beta-dihydroxy-5alpha-androstan-17-one + NADP(+). Functionally, controls the reversible conversion of biologically active glucocorticoids such as cortisone to cortisol, and 11-dehydrocorticosterone to corticosterone in the presence of NADP(H). Participates in the corticosteroid receptor-mediated anti-inflammatory response, as well as metabolic and homeostatic processes. Plays a role in the secretion of aqueous humor in the eye, maintaining a normotensive, intraocular environment. Bidirectional in vitro, predominantly functions as a reductase in vivo, thereby increasing the concentration of active glucocorticoids. It has broad substrate specificity, besides glucocorticoids, it accepts other steroid and sterol substrates. Interconverts 7-oxo- and 7-hydroxy-neurosteroids such as 7-oxopregnenolone and 7beta-hydroxypregnenolone, 7-oxodehydroepiandrosterone (3beta-hydroxy-5-androstene-7,17-dione) and 7beta-hydroxydehydroepiandrosterone (3beta,7beta-dihydroxyandrost-5-en-17-one), among others. Catalyzes the stereo-specific conversion of the major dietary oxysterol, 7-ketocholesterol (7-oxocholesterol), into the more polar 7-beta-hydroxycholesterol metabolite. 7-oxocholesterol is one of the most important oxysterols, it participates in several events such as induction of apoptosis, accumulation in atherosclerotic lesions, lipid peroxidation, and induction of foam cell formation. Mediates the 7-oxo reduction of 7-oxolithocholate mainly to chenodeoxycholate, and to a lesser extent to ursodeoxycholate, both in its free form and when conjugated to glycine or taurine, providing a link between glucocorticoid activation and bile acid metabolism. Catalyzes the synthesis of 7-beta-25-dihydroxycholesterol from 7-oxo-25-hydroxycholesterol in vitro, which acts as a ligand for the G-protein-coupled receptor (GPCR) Epstein-Barr virus-induced gene 2 (EBI2) and may thereby regulate immune cell migration. This chain is 11-beta-hydroxysteroid dehydrogenase 1, found in Bos taurus (Bovine).